A 286-amino-acid chain; its full sequence is Shikimate dehydrogenase (NADP(+)) (286 aa).

Shikimate is bound by residues 19–21 (SVS) and threonine 66. The active-site Proton acceptor is lysine 70. 2 residues coordinate shikimate: asparagine 91 and aspartate 106. NADP(+)-binding positions include 130–134 (GAGGS) and alanine 225. Tyrosine 227 contacts shikimate. Glycine 248 provides a ligand contact to NADP(+).

The protein belongs to the shikimate dehydrogenase family. As to quaternary structure, homodimer.

It carries out the reaction shikimate + NADP(+) = 3-dehydroshikimate + NADPH + H(+). Its pathway is metabolic intermediate biosynthesis; chorismate biosynthesis; chorismate from D-erythrose 4-phosphate and phosphoenolpyruvate: step 4/7. In terms of biological role, involved in the biosynthesis of the chorismate, which leads to the biosynthesis of aromatic amino acids. Catalyzes the reversible NADPH linked reduction of 3-dehydroshikimate (DHSA) to yield shikimate (SA). The protein is Shikimate dehydrogenase (NADP(+)) of Dehalococcoides mccartyi (strain ATCC BAA-2100 / JCM 16839 / KCTC 5957 / BAV1).